A 473-amino-acid polypeptide reads, in one-letter code: Cannabinoid receptor 1 (473 aa).

Over 1 to 118 the chain is Extracellular; the sequence is MKSILDGLAD…CFMILNPSQQ (118 aa). Residues 2 to 23 are required for mitochondrial localization; the sequence is KSILDGLADTTFRTITTDLLYV. N-linked (GlcNAc...) asparagine glycans are attached at residues Asn79 and Asn85. Residues 119–144 traverse the membrane as a helical segment; it reads LAIAVLSLTLGTFTVLENLLVLCVIL. Over 145–156 the chain is Cytoplasmic; it reads HSRSLRCRPSYH. Residues 157 to 177 form a helical membrane-spanning segment; that stretch reads FIGSLAVADLLGSVIFVYSFV. The Extracellular portion of the chain corresponds to 178–189; it reads DFHVFHRKDSPN. The chain crosses the membrane as a helical span at residues 190–214; that stretch reads VFLFKLGGVTASFTASVGSLFLTAI. Residues 215-234 are Cytoplasmic-facing; the sequence is DRYISIHRPLAYKRIVTRPK. A helical membrane pass occupies residues 235–257; it reads AVVAFCVMWTIAIVIAVLPLLGW. Topologically, residues 258–275 are extracellular; sequence NCKKLNSVCSDIFPLIDE. The chain crosses the membrane as a helical span at residues 276–301; that stretch reads TYLMFWIGVTSILLLFIVYAYMYILW. Over 302 to 346 the chain is Cytoplasmic; sequence KAHSHAVRMLQRGTQKSIIIQSTEDGKVQITRPDQTRMDIRLAKT. Residues 347-367 traverse the membrane as a helical segment; the sequence is LVLILVVLIICWGPLLAIMVY. Over 368 to 379 the chain is Extracellular; sequence DVFGKMNKLIKT. A helical transmembrane segment spans residues 380 to 401; that stretch reads IFAFCSMLCLLNSTVNPIIYAL. Residues 402–473 lie on the Cytoplasmic side of the membrane; sequence RSKDLRHAFR…VSTDTTAEAL (72 aa). Cys417 is lipidated: S-palmitoyl cysteine.

Belongs to the G-protein coupled receptor 1 family. In terms of processing, palmitoylation at Cys-417 is important for recruitment at both plasma membrane and lipid rafts and association with G protein alpha subunits.

The protein localises to the cell membrane. Its subcellular location is the mitochondrion outer membrane. It localises to the cell projection. It is found in the axon. The protein resides in the presynapse. Functionally, G-protein coupled receptor for cannabinoids. Mediates many cannabinoid-induced effects in the central nervous system (CNS), as well as in peripheral tissues. Regulates cellular respiration and energy production in response to cannabinoids. Signaling typically involves reduction in cyclic AMP. The protein is Cannabinoid receptor 1 (CNR1) of Taeniopygia guttata (Zebra finch).